The primary structure comprises 172 residues: MNSYGVILISYVGLIKLALAGILCYGIYLAIKSEKNLIKDALFVYKDNNFNVFGKKYALMIFLAFGFPIFFIGSFLYLFWEKLPEGFRFSLTFAITFFVLFIFGLLFVKYKIRVCKNGIYVGFRFITWKGFEGYKIENNKIILIGKKGVTYPVHLKYSKELEDIIKNYLKKI.

3 consecutive transmembrane segments (helical) span residues 7–27, 59–79, and 89–109; these read ILISYVGLIKLALAGILCYGI, LMIFLAFGFPIFFIGSFLYLF, and FSLTFAITFFVLFIFGLLFVK.

To M.jannaschii MJ0695.

Its subcellular location is the cell membrane. This is an uncharacterized protein from Methanocaldococcus jannaschii (strain ATCC 43067 / DSM 2661 / JAL-1 / JCM 10045 / NBRC 100440) (Methanococcus jannaschii).